The following is a 496-amino-acid chain: MGFFSSTQPPRPATVPSDEIIPLHFWNTALCMRGTVLDISLKFDDVLDTSKLRSALEELLEMKDWRQLGARLRMNPNGRLEYHIPTRFDASRPAFAMTNAQHETSIADHPLGARIPHATSTPAIFPSPDVLSPLLRSEDAPKNIDDWICSDRPQLSIHIITFSDATLITVTWLHTLTDVMGMALILNAWTALLRGNREAVPKLQGFRLDPLTELGQRTPAEKYMHFNRVFGRKEFWWFIGLNVLDRLWYRQEERRTICIPAASLRNLCQQSSSEICASRGKEEPVPFVSESDVLLGWWVRSLYSALGLRTDQTILVNNALNLRTSLHESFTSNNSAYMGNALCMSPTFLRGHQVADEPLGQIALRIRESVTEQRTPEQVEAMTALQMQTMEQTGYLALVGDPRMMLLSCSNWHKARLFDIDFSSAVLQSSGPSSLQNPQHTGKPCYVNGVQHSANSFRNVLSVIGKDAGGNWWLTGVLRTDAWTHIEKQLHKLGSS.

Residues H174 and D421 each act as proton acceptor in the active site.

Belongs to the plant acyltransferase family. In terms of assembly, monomer.

It participates in secondary metabolite biosynthesis; terpenoid biosynthesis. Acetyltransferase; part of the gene cluster that mediates the biosynthesis of andrastins, meroterpenoid compounds that exhibit inhibitory activity against ras farnesyltransferase, suggesting that they could be promising leads for antitumor agents. The first step of the pathway is the synthesis of 3,5-dimethylorsellinic acid (DMOA) by the polyketide synthase adrD via condensation of one acetyl-CoA starter unit with 3 malonyl-CoA units and 2 methylations. DMAO is then converted to farnesyl-DMAO by the prenyltransferase adrG. The methyltransferase adrK catalyzes the methylation of the carboxyl group of farnesyl-DMAO to farnesyl-DMAO methyl ester which is further converted to epoxyfarnesyl-DMAO methyl ester by the FAD-dependent monooxygenase adrH. The terpene cyclase adrI then catalyzes the carbon skeletal rearrangement to generate the andrastin E, the first compound in the pathway having the andrastin scaffold, with the tetracyclic ring system. The post-cyclization tailoring enzymes adrF, adrE, adrJ, and adrA, are involved in the conversion of andrastin E into andrastin A. The short chain dehydrogenase adrF is responsible for the oxidation of the C-3 a hydroxyl group of andrastin E to yield the corresponding ketone, andrastin D. The ketoreductase adrE stereoselectively reduces the carbonyl moiety to reverse the stereochemistry of the C-3 position to yield andrastin F. The acetyltransferase adrJ is the acetyltransferase that attaches the acetyl group to the C-3 hydroxyl group of andrastin F to yield andrastin C. Finally, the cytochrome P450 monooxygenase adrA catalyzes two sequential oxidation reactions of the C-23 methyl group, to generate the corresponding alcohol andrastin B, and aldehyde andrastin A. The polypeptide is Acetyltransferase adrJ (Penicillium roqueforti).